The sequence spans 279 residues: Type II iodothyronine deiodinase (279 aa).

The Lumenal segment spans residues 1–7; the sequence is MGLLSAD. Residues 8 to 28 traverse the membrane as a helical; Signal-anchor for type III membrane protein segment; that stretch reads LLITLQILPVFFSNCLFLALY. The Cytoplasmic segment spans residues 29-279; the sequence is DSVILLKHMV…TEDLSTDVSL (251 aa). U132 is an active-site residue. Residues U132 and U265 are each a non-standard amino acid (selenocysteine).

This sequence belongs to the iodothyronine deiodinase family. Predominantly monomer. Can form homodimers but homodimerization is not essential for enzyme activity. As to expression, highly expressed in liver and in various parts of the brain including telencephalon, hippocampus, cerebellum, and brain stem, and weakly expressed in thyroid, lung, and small intestine. Not detected in skeletal muscle, heart atria or ventricle, gizzard or kidney.

Its subcellular location is the endoplasmic reticulum membrane. The enzyme catalyses 3,3',5-triiodo-L-thyronine + iodide + A + H(+) = L-thyroxine + AH2. It carries out the reaction 3,3'-diiodo-L-thyronine + iodide + A + H(+) = 3,3',5'-triiodo-L-thyronine + AH2. It catalyses the reaction 3'-iodo-L-thyronine + iodide + A + H(+) = 3',5'-diiodo-L-thyronine + AH2. The catalysed reaction is 3,3'-diiodothyronamine + iodide + A + H(+) = 3,3',5'-triiodothyronamine + AH2. The enzyme catalyses 3'-iodothyronamine + iodide + A + H(+) = 3',5'-diiodothyronamine + AH2. With respect to regulation, not inhibited by N(6)-propylthiouracil. Its function is as follows. Plays a crucial role in the metabolism of thyroid hormones (TH) and has specific roles in TH activation and inactivation by deiodination. Catalyzes the deiodination of L-thyroxine (T4) to 3,5,3'-triiodothyronine (T3) and 3,3',5'-triiodothyronine (rT3) to 3,3'-diiodothyronine (3,3'-T2) via outer-ring deiodination (ORD). Catalyzes the deiodination of 3',5'-diiodothyronine (3',5'-T2) to 3'-monoiodothyronine (3'-T1) via ORD. Catalyzes the phenolic ring deiodinations of 3,3',5'-triiodothyronamine and 3',5'- diiodothyronamine. In Gallus gallus (Chicken), this protein is Type II iodothyronine deiodinase (DIO2).